A 745-amino-acid polypeptide reads, in one-letter code: Aminopeptidase NAALADL1 (745 aa).

At 1–6 (MHWAKI) the chain is on the cytoplasmic side. Residues 7 to 28 (LGVGIGAAALLGLGIILGHFAI) form a helical; Signal-anchor for type II membrane protein membrane-spanning segment. Over 29-745 (PKATEPLASS…AATLQPVTDL (717 aa)) the chain is Extracellular. N-linked (GlcNAc...) asparagine glycans are attached at residues Asn128, Asn141, and Asn235. Thr263 and Leu266 together coordinate Ca(2+). N-linked (GlcNAc...) asparagine glycosylation is found at Asn279, Asn304, and Asn350. The cysteines at positions 301 and 318 are disulfide-linked. Positions 373 and 383 each coordinate Zn(2+). The active-site Proton donor/acceptor is the Glu421. Glu422 is a binding site for Zn(2+). 2 residues coordinate Ca(2+): Glu430 and Glu433. Asp450 is a binding site for Zn(2+). Asn456 and Asn497 each carry an N-linked (GlcNAc...) asparagine glycan. His550 contacts Zn(2+). N-linked (GlcNAc...) asparagine glycans are attached at residues Asn593 and Asn620.

The protein belongs to the peptidase M28 family. M28B subfamily. In terms of assembly, homodimer. Zn(2+) is required as a cofactor. Post-translationally, N-glycosylated. In terms of tissue distribution, detected on apical villi on the brush border membrane of ileum enterocytes (at protein level). Mainly expressed in the distal small intestine.

It is found in the apical cell membrane. Its function is as follows. Aminopeptidase with broad substrate specificity. Has lower activity with substrates that have Asp or Glu in the P2' position, or Pro in the P3' position. Lacks activity with substrates that have both Pro in the P3' position and Asp or Glu in the P2' position. Lacks carboxypeptidase activity. Lacks dipeptidyl-peptidase IV type activity. This is Aminopeptidase NAALADL1 (Naaladl1) from Rattus norvegicus (Rat).